The chain runs to 811 residues: Glycerol-3-phosphate acyltransferase (811 aa).

The HXXXXD motif signature appears at 309–314 (CHRSHM).

It belongs to the GPAT/DAPAT family.

It is found in the cell inner membrane. The enzyme catalyses sn-glycerol 3-phosphate + an acyl-CoA = a 1-acyl-sn-glycero-3-phosphate + CoA. It participates in phospholipid metabolism; CDP-diacylglycerol biosynthesis; CDP-diacylglycerol from sn-glycerol 3-phosphate: step 1/3. This chain is Glycerol-3-phosphate acyltransferase, found in Colwellia psychrerythraea (strain 34H / ATCC BAA-681) (Vibrio psychroerythus).